Here is a 278-residue protein sequence, read N- to C-terminus: Short-chain dehydrogenase RED2 (278 aa).

The NADP(+) site is built by Ile15, Asp70, Arg132, Tyr178, Lys182, Val211, and Thr213. The active-site Proton donor is Tyr178. Catalysis depends on Lys182, which acts as the Lowers pKa of active site Tyr.

This sequence belongs to the short-chain dehydrogenases/reductases (SDR) family.

It functions in the pathway polyketide biosynthesis. Short-chain dehydrogenase; part of the gene cluster that mediates the biosynthesis of pyriculol and pyriculariol, two heptaketides that induce lesion formation upon application on rice leaves but are dispensable for pathogenicity. The highly reducing polyketide synthase synthesizes the heptaketide backbone of pyriculol and pyriculariol. Pyriculol and pyriculariol contain several hydroxyl moieties and double bonds, so it can be assumed that several reduction steps occur during biosynthesis. These reactions could be executed by PKS19 itself or partly by the tailoring enzymes OXR1, OXR2, RED1, RED2 or RED3, identified within the cluster. The FAD-linked oxidoreductase OXR1 is the only tailoring enzyme for which the function has been determined yet, and is involved in the oxidation of dihydropyriculol and dihydropyriculariol into pyriculol and pyriculariol, respectively. The protein is Short-chain dehydrogenase RED2 of Pyricularia oryzae (strain 70-15 / ATCC MYA-4617 / FGSC 8958) (Rice blast fungus).